A 1331-amino-acid polypeptide reads, in one-letter code: X-linked retinitis pigmentosa GTPase regulator-interacting protein 1 (1331 aa).

3 disordered regions span residues 1–165, 183–220, and 351–374; these read MQHL…PPAF, SQLTHTMTTDSTHVEEIPRSPEKTSKVEKPEQRSSEEC, and HQPLDSSHQPHWSTELTGKQLPPQ. Over residues 41-67 the composition is skewed to basic and acidic residues; the sequence is NQKELNCRRLHLHEEPTLVKEPSPKQR. 2 stretches are compositionally biased toward polar residues: residues 77-86 and 183-193; these read VQRSTTTQPD and SQLTHTMTTDS. The segment covering 194–220 has biased composition (basic and acidic residues); it reads THVEEIPRSPEKTSKVEKPEQRSSEEC. Coiled-coil stretches lie at residues 236–352 and 498–546; these read ELIR…SSHQ and MCYQ…LRSH. Polar residues predominate over residues 351 to 367; it reads HQPLDSSHQPHWSTELT. The 126-residue stretch at 745–870 folds into the C2 domain; that stretch reads GARKVQSNES…AQNKSIKGDF (126 aa). Disordered stretches follow at residues 899–1057 and 1088–1146; these read FQMS…VQDK and AEDG…SDDI. Positions 908 to 999 form a coiled coil; sequence EGEEKEEEGG…DVLEASFTEE (92 aa). Residues 910–988 are compositionally biased toward acidic residues; sequence EEKEEEGGEE…EEEEEEEDEN (79 aa). Composition is skewed to basic and acidic residues over residues 1022 to 1039 and 1088 to 1115; these read PEKRKPPVIAEKKEREHQ and AEDGGLKAQDKREEPPSPRSALRQEHPS. A compositionally biased stretch (polar residues) spans 1129–1141; the sequence is CEQASEVSETQTT. The segment at 1136–1326 is interaction with RPGR; it reads SETQTTDSDD…ALHGIYKEMT (191 aa).

It belongs to the RPGRIP1 family. Interacts with NPHP4. Interacts with NEK4. Forms homodimers and elongated homopolymers. Interacts with RPGR. Interacts with SPATA7. Interacts with CEP290/NPHP6; mediating the association between RPGR and CEP290/NPHP6. Expressed in the retina (at protein level).

Its subcellular location is the cell projection. The protein localises to the cilium. Functionally, may function as scaffolding protein. Required for normal location of RPGR at the connecting cilium of photoreceptor cells. Required for normal disk morphogenesis and disk organization in the outer segment of photoreceptor cells and for survival of photoreceptor cells. This chain is X-linked retinitis pigmentosa GTPase regulator-interacting protein 1 (Rpgrip1), found in Mus musculus (Mouse).